A 570-amino-acid chain; its full sequence is Fibropellin-3 (570 aa).

Residues 1–17 form the signal peptide; the sequence is MKVSLLAVLLLSIVAAT. The EGF-like 1 domain occupies 18 to 55; the sequence is YGQGECGSNPCENGSVCRDGEGTYICECQMGYDGQNCD. 4 disulfide bridges follow: cysteine 23/cysteine 34, cysteine 28/cysteine 43, cysteine 45/cysteine 54, and cysteine 62/cysteine 88. Asparagine 30 is a glycosylation site (N-linked (GlcNAc...) asparagine). Positions 62–175 constitute a CUB domain; the sequence is CGYNIFESTG…RKGFRITFSS (114 aa). N-linked (GlcNAc...) asparagine glycosylation is present at asparagine 136. The 37-residue stretch at 176-212 folds into the EGF-like 2; calcium-binding domain; that stretch reads DGDDCTPNPCLNGATCVDQVNDYQCICAPGFTGDNCE. Intrachain disulfides connect cysteine 180–cysteine 191, cysteine 185–cysteine 200, cysteine 202–cysteine 211, cysteine 218–cysteine 229, cysteine 223–cysteine 238, cysteine 240–cysteine 249, cysteine 256–cysteine 267, cysteine 261–cysteine 276, cysteine 278–cysteine 287, cysteine 294–cysteine 305, cysteine 299–cysteine 314, cysteine 316–cysteine 325, cysteine 332–cysteine 343, cysteine 337–cysteine 352, cysteine 354–cysteine 363, cysteine 370–cysteine 381, cysteine 375–cysteine 390, cysteine 392–cysteine 401, cysteine 408–cysteine 419, cysteine 413–cysteine 428, cysteine 430–cysteine 439, and cysteine 445–cysteine 521. An EGF-like 3; calcium-binding domain is found at 214–250; that stretch reads DIDECASAPCRNGGACVDQVNGYTCNCIPGFNGVNCE. The 37-residue stretch at 252-288 folds into the EGF-like 4; calcium-binding domain; sequence NINECASIPCLNGGICVDGINQFACTCLPGYTGILCE. Residues 290 to 326 enclose the EGF-like 5; calcium-binding domain; that stretch reads DINECASSPCQNGGSCTDAVNRYTCDCRAGFTGSNCE. Positions 328 to 364 constitute an EGF-like 6; calcium-binding domain; the sequence is NINECASSPCLNGGSCLDGVDGYVCQCLPNYTGTHCE. Asparagine 357 carries N-linked (GlcNAc...) asparagine glycosylation. Positions 366-402 constitute an EGF-like 7 domain; sequence SLDACASLPCQNGGVCTNVGGDYVCECLPGYTGINCE. In terms of domain architecture, EGF-like 8; calcium-binding spans 404 to 440; it reads DINECASLPCQNGGECINGIAMYICQCRQGYAGVNCE. Residues 443–562 enclose the Avidin-like domain; it reads GFCDLEGVWF…GQDKWTRYEQ (120 aa).

In terms of assembly, homotetramer.

The protein resides in the secreted. It localises to the extracellular space. Its function is as follows. Forms the apical lamina, a component of the extracellular matrix. The chain is Fibropellin-3 (EGF3) from Strongylocentrotus purpuratus (Purple sea urchin).